Consider the following 192-residue polypeptide: UPF0312 protein YE1254 (192 aa).

Positions 1-23 (MFNKTLLGLTVGALMFTAGSAVA) are cleaved as a signal peptide.

It belongs to the UPF0312 family. Type 1 subfamily.

It localises to the periplasm. This Yersinia enterocolitica serotype O:8 / biotype 1B (strain NCTC 13174 / 8081) protein is UPF0312 protein YE1254.